We begin with the raw amino-acid sequence, 161 residues long: Nascent polypeptide-associated complex subunit beta (161 aa).

Disordered stretches follow at residues L14–S41 and Q125–E161. One can recognise an NAC-A/B domain in the interval N37–F102. A compositionally biased stretch (low complexity) spans Q125–T134. Residues E135 to D146 are compositionally biased toward basic and acidic residues.

Belongs to the NAC-beta family. Part of the nascent polypeptide-associated complex (NAC), consisting of EGD2 and EGD1. NAC associates with ribosomes via EGD1.

It localises to the cytoplasm. Its subcellular location is the nucleus. In terms of biological role, component of the nascent polypeptide-associated complex (NAC), a dynamic component of the ribosomal exit tunnel, protecting the emerging polypeptides from interaction with other cytoplasmic proteins to ensure appropriate nascent protein targeting. The NAC complex also promotes mitochondrial protein import by enhancing productive ribosome interactions with the outer mitochondrial membrane and blocks the inappropriate interaction of ribosomes translating non-secretory nascent polypeptides with translocation sites in the membrane of the endoplasmic reticulum. EGD1 may act as a transcription factor that exert a negative effect on the expression of several genes that are transcribed by RNA polymerase II. The protein is Nascent polypeptide-associated complex subunit beta (EGD1) of Eremothecium gossypii (strain ATCC 10895 / CBS 109.51 / FGSC 9923 / NRRL Y-1056) (Yeast).